The following is a 224-amino-acid chain: Cysteine S-methyltransferase NleE (224 aa).

An interaction with host proteins TAB2, TAB3 and ZRANB3 region spans residues 49–52 (GITR). S-adenosyl-L-methionine contacts are provided by A92, S98, R107, Q111, Y204, and E208.

The protein belongs to the NleE/OspZ family. In terms of assembly, monomer.

The protein localises to the secreted. It localises to the host nucleus. The catalysed reaction is L-cysteinyl-[protein] + S-adenosyl-L-methionine = S-methyl-L-cysteinyl-[protein] + S-adenosyl-L-homocysteine + H(+). In terms of biological role, cysteine methyltransferase effector that inhibits host cell NF-kappa-B activation by preventing nuclear translocation of host protein RELA/p65. Acts by mediating cysteine methylation of host proteins TAB2 and TAB3: methylation of a conserved cysteine residue of the RanBP2-type zinc finger (NZF) of TAB2 and TAB3 disrupts zinc-binding, thereby inactivating the ubiquitin chain-binding activity of TAB2 and TAB3, leading to NF-kappa-B inactivation. Also mediates cysteine methylation of host protein ZRANB3, inactivating its ability to bind ubiquitin chains. This is Cysteine S-methyltransferase NleE from Escherichia coli O127:H6 (strain E2348/69 / EPEC).